Consider the following 331-residue polypeptide: (E)-beta farnesene synthase MBR_03882 (331 aa).

Belongs to the trichodiene synthase family.

The enzyme catalyses (2E,6E)-farnesyl diphosphate = (E)-beta-farnesene + diphosphate. Terpene synthase that catalyzes the conversion of (2E,6E)-farnesyl diphosphate (FPP) into the volatile sesquiterpene (E)-beta-farnesene. The protein is (E)-beta farnesene synthase MBR_03882 of Metarhizium brunneum (strain ARSEF 3297).